A 259-amino-acid chain; its full sequence is 14-3-3-like protein (259 aa).

The protein belongs to the 14-3-3 family.

This is 14-3-3-like protein from Helianthus annuus (Common sunflower).